Consider the following 325-residue polypeptide: D site-binding protein (325 aa).

Disordered stretches follow at residues methionine 1–serine 98, leucine 124–methionine 203, and phenylalanine 230–glutamate 256. The segment covering glycine 17–leucine 28 has biased composition (gly residues). Positions alanine 71–alanine 80 are enriched in low complexity. Serine 86 is subject to Phosphoserine. Residues arginine 88–serine 98 are compositionally biased toward low complexity. Residues proline 129–glycine 153 show a composition bias toward pro residues. Residues proline 154–alanine 171 are compositionally biased toward low complexity. The bZIP domain occupies aspartate 255 to tyrosine 318. Residues lysine 257–lysine 279 are basic motif. A leucine-zipper region spans residues isoleucine 283 to leucine 297.

It belongs to the bZIP family. PAR subfamily. As to quaternary structure, binds DNA as a homodimer or a heterodimer. Can form a heterodimer with TEF. In terms of tissue distribution, expressed in the suprachiasmatic nuclei (SCN) and in most peripheral tissues, with a strong circadian rhythmicity.

It localises to the nucleus. Functionally, this transcriptional activator recognizes and binds to the sequence 5'-RTTAYGTAAY-3' found in the promoter of genes such as albumin, CYP2A4 and CYP2A5. It is not essential for circadian rhythm generation, but modulates important clock output genes. May be a direct target for regulation by the circadian pacemaker component clock. May affect circadian period and sleep regulation. In Mus musculus (Mouse), this protein is D site-binding protein (Dbp).